A 970-amino-acid chain; its full sequence is Sodium/calcium exchanger 1 (970 aa).

A signal peptide spans 1–32 (MLRLRLSPTFSVGFHLLAFVPLLFSHVDLISA). At 33–71 (DTEMEGEGNETGECTGSYYCKKGVILPIWEPQDPSFGDK) the chain is on the extracellular side. Asn-41 carries N-linked (GlcNAc...) asparagine glycosylation. The helical transmembrane segment at 72–92 (IARATVYFVAMVYMFLGVSII) threads the bilayer. Topologically, residues 93-133 (ADRFMSSIEVITSQEKEITIKKPNGETTKTTVRIWNETVSN) are cytoplasmic. The helical transmembrane segment at 134 to 154 (LTLMALGSSAPEILLSVIEVC) threads the bilayer. The stretch at 138–178 (ALGSSAPEILLSVIEVCGHNFTAGDLGPSTIVGSAAFNMFI) is one Alpha-1 repeat. The Extracellular segment spans residues 155 to 167 (GHNFTAGDLGPST). Residue Asn-157 is glycosylated (N-linked (GlcNAc...) asparagine). Residues 168–188 (IVGSAAFNMFIIIALCVYVVP) form a helical membrane-spanning segment. The Cytoplasmic portion of the chain corresponds to 189-201 (DGETRKIKHLRVF). The helical transmembrane segment at 202-222 (FVTAAWSIFAYTWLYIILSVI) threads the bilayer. Topologically, residues 223 to 228 (SPGVVE) are extracellular. Residues 229–249 (VWEGLLTFFFFPICVVFAWVA) form a helical membrane-spanning segment. Topologically, residues 250 to 797 (DRRLLFYKYV…FVPPTEYWNG (548 aa)) are cytoplasmic. The segment at 251 to 270 (RRLLFYKYVYKRYRAGKQRG) is putative calmodulin-binding region. Phosphoserine occurs at positions 282 and 389. Calx-beta domains follow at residues 393 to 493 (VNTE…VHLS) and 524 to 624 (ATVT…LEIG). 16 residues coordinate Ca(2+): Glu-417, Asp-453, Asp-478, Asp-479, Ile-481, Glu-483, Glu-486, Asp-530, Asp-531, Asp-532, Glu-548, Asp-584, Asp-610, Glu-611, Glu-612, and Glu-715. Residues 798 to 818 (WACFIVSILMIGILTAFIGDL) form a helical membrane-spanning segment. Residues 819–821 (ASH) are Extracellular-facing. The chain crosses the membrane as a helical span at residues 822 to 842 (FGCTIGLKDSVTAVVFVALGT). An Alpha-2 repeat occupies 839–875 (ALGTSVPDTFASKVAATQDQYADASIGNVTGSNAVNV). Residues 843–871 (SVPDTFASKVAATQDQYADASIGNVTGSN) are Cytoplasmic-facing. The helical transmembrane segment at 872–892 (AVNVFLGIGVAWSIAAIYHAA) threads the bilayer. Residues 893-903 (NGEQFKVSPGT) lie on the Extracellular side of the membrane. A helical transmembrane segment spans residues 904–924 (LAFSVTLFTIFAFINVGVLLY). Topologically, residues 925 to 941 (RRRPEIGGELGGPRTAK) are cytoplasmic. Residues 942 to 962 (LLTSCLFVLLWLLYIFFSSLE) form a helical membrane-spanning segment. At 963-970 (AYCHIKGF) the chain is on the extracellular side.

The protein belongs to the Ca(2+):cation antiporter (CaCA) (TC 2.A.19) family. SLC8 subfamily. As to expression, detected in heart (at protein level). Detected in heart.

It is found in the cell membrane. It carries out the reaction Ca(2+)(in) + 3 Na(+)(out) = Ca(2+)(out) + 3 Na(+)(in). Activated by micromolar levels of Ca(2+). Its function is as follows. Mediates the exchange of one Ca(2+) ion against three to four Na(+) ions across the cell membrane, and thereby contributes to the regulation of cytoplasmic Ca(2+) levels and Ca(2+)-dependent cellular processes. Contributes to Ca(2+) transport during excitation-contraction coupling in muscle. In a first phase, voltage-gated channels mediate the rapid increase of cytoplasmic Ca(2+) levels due to release of Ca(2+) stores from the endoplasmic reticulum. SLC8A1 mediates the export of Ca(2+) from the cell during the next phase, so that cytoplasmic Ca(2+) levels rapidly return to baseline. Required for normal embryonic heart development and the onset of heart contractions. This Felis catus (Cat) protein is Sodium/calcium exchanger 1 (SLC8A1).